The sequence spans 92 residues: Small ribosomal subunit protein uS19 (92 aa).

The protein belongs to the universal ribosomal protein uS19 family.

Its function is as follows. Protein S19 forms a complex with S13 that binds strongly to the 16S ribosomal RNA. The protein is Small ribosomal subunit protein uS19 of Paramagnetospirillum magneticum (strain ATCC 700264 / AMB-1) (Magnetospirillum magneticum).